The sequence spans 478 residues: Trigger factor (478 aa).

Basic and acidic residues predominate over residues 154–167 (MAKDSRSFEPREEG). Disordered stretches follow at residues 154–173 (MAKD…AQSG) and 444–478 (LFAE…KAAG). The PPIase FKBP-type domain occupies 173-258 (GDRVTIDFVG…VKAVAAPGET (86 aa)).

The protein belongs to the FKBP-type PPIase family. Tig subfamily.

The protein localises to the cytoplasm. It catalyses the reaction [protein]-peptidylproline (omega=180) = [protein]-peptidylproline (omega=0). Involved in protein export. Acts as a chaperone by maintaining the newly synthesized protein in an open conformation. Functions as a peptidyl-prolyl cis-trans isomerase. This Methylorubrum populi (strain ATCC BAA-705 / NCIMB 13946 / BJ001) (Methylobacterium populi) protein is Trigger factor.